The chain runs to 37 residues: Large ribosomal subunit protein bL36 (37 aa).

This sequence belongs to the bacterial ribosomal protein bL36 family.

In Deinococcus geothermalis (strain DSM 11300 / CIP 105573 / AG-3a), this protein is Large ribosomal subunit protein bL36.